The primary structure comprises 237 residues: Orotidine 5'-phosphate decarboxylase (237 aa).

Residues D17, K39, 66–75 (DLKLHDIGNT), T121, R182, Q191, G211, and R212 each bind substrate. The active-site Proton donor is K68.

Belongs to the OMP decarboxylase family. Type 1 subfamily. Homodimer.

The catalysed reaction is orotidine 5'-phosphate + H(+) = UMP + CO2. It functions in the pathway pyrimidine metabolism; UMP biosynthesis via de novo pathway; UMP from orotate: step 2/2. Catalyzes the decarboxylation of orotidine 5'-monophosphate (OMP) to uridine 5'-monophosphate (UMP). This is Orotidine 5'-phosphate decarboxylase from Rhodopseudomonas palustris (strain ATCC BAA-98 / CGA009).